The following is a 98-amino-acid chain: Large ribosomal subunit protein uL23 (98 aa).

This sequence belongs to the universal ribosomal protein uL23 family. As to quaternary structure, part of the 50S ribosomal subunit. Contacts protein L29, and trigger factor when it is bound to the ribosome.

Its function is as follows. One of the early assembly proteins it binds 23S rRNA. One of the proteins that surrounds the polypeptide exit tunnel on the outside of the ribosome. Forms the main docking site for trigger factor binding to the ribosome. This Limosilactobacillus reuteri (strain DSM 20016) (Lactobacillus reuteri) protein is Large ribosomal subunit protein uL23.